The primary structure comprises 587 residues: Bifunctional dihydrofolate reductase-thymidylate synthase (587 aa).

The region spanning 9-237 (DIYAICACCK…TTLDFIIYSK (229 aa)) is the DHFR domain. 36 to 42 (GIGNAGV) is an NADP(+) binding site. Residue aspartate 51 coordinates substrate. NADP(+)-binding positions include 108–110 (KKS) and 129–132 (LSRT). Isoleucine 173, tyrosine 179, and threonine 194 together coordinate substrate. 174–181 (GGSSVYKE) is a binding site for NADP(+). Residues 301 to 587 (NHPEYQYLNI…HDKINMDMAA (287 aa)) form a thymidylate synthase region. Arginine 324 is a dUMP binding site. Residue cysteine 469 is part of the active site. DUMP contacts are provided by residues histidine 470, 488–492 (QRSCD), asparagine 500, and 530–532 (HVY).

This sequence in the N-terminal section; belongs to the dihydrofolate reductase family. It in the C-terminal section; belongs to the thymidylate synthase family. In terms of assembly, homodimer.

The enzyme catalyses (6S)-5,6,7,8-tetrahydrofolate + NADP(+) = 7,8-dihydrofolate + NADPH + H(+). The catalysed reaction is dUMP + (6R)-5,10-methylene-5,6,7,8-tetrahydrofolate = 7,8-dihydrofolate + dTMP. Its pathway is cofactor biosynthesis; tetrahydrofolate biosynthesis; 5,6,7,8-tetrahydrofolate from 7,8-dihydrofolate: step 1/1. Functionally, bifunctional enzyme. Involved in de novo dTMP biosynthesis. Key enzyme in folate metabolism. Catalyzes an essential reaction for de novo glycine and purine synthesis, DNA precursor synthesis, and for the conversion of dUMP to dTMP. The protein is Bifunctional dihydrofolate reductase-thymidylate synthase of Plasmodium berghei (strain Anka).